The following is a 374-amino-acid chain: Outer membrane protein assembly factor BamC (374 aa).

The first 22 residues, 1 to 22 (MSKFYKSGRVTTAVIVALSLSA), serve as a signal peptide directing secretion. The N-palmitoyl cysteine moiety is linked to residue Cys23. Cys23 carries the S-diacylglycerol cysteine lipid modification.

The protein belongs to the BamC family. Part of the Bam complex.

It is found in the cell outer membrane. Functionally, part of the outer membrane protein assembly complex, which is involved in assembly and insertion of beta-barrel proteins into the outer membrane. This is Outer membrane protein assembly factor BamC from Psychromonas ingrahamii (strain DSM 17664 / CCUG 51855 / 37).